Consider the following 504-residue polypeptide: Facilitated trehalose transporter Tret1 (504 aa).

Over 1–39 the chain is Cytoplasmic; that stretch reads MELNNKEDSPRHTVPFVRQITEDGKAKLEIYRPTTNPIY. A helical transmembrane segment spans residues 40–60; that stretch reads IYTQILAAIAVSMGSMVVGFA. Over 61–87 the chain is Extracellular; that stretch reads SAYTSPALVSMQNTTITSFKVTEQEAS. An N-linked (GlcNAc...) asparagine glycan is attached at asparagine 73. Residues 88–108 form a helical membrane-spanning segment; that stretch reads WVGGIMPLAGLAGGIAGGPFI. At 109–120 the chain is on the cytoplasmic side; that stretch reads EYLGRKNTILAT. Residues 121–141 form a helical membrane-spanning segment; that stretch reads AVPFIVAWLLIAFANSIWMVL. Residues 142–145 are Extracellular-facing; it reads AGRA. Residues 146 to 166 form a helical membrane-spanning segment; the sequence is LSGFCVGIASLSLPVYLGETV. Residues 167–171 are Cytoplasmic-facing; that stretch reads QPEVR. Residues 172-192 form a helical membrane-spanning segment; it reads GTLGLLPTAFGNIGILICFVA. The Extracellular segment spans residues 193–199; sequence GKYVNWS. Asparagine 197 carries an N-linked (GlcNAc...) asparagine glycan. Residues 200-220 form a helical membrane-spanning segment; it reads GLAFIGSILPIPFMVLTLLIP. At 221-283 the chain is on the cytoplasmic side; sequence ETPRWFVTRG…DLMKRSNLKP (63 aa). Residues 284–304 form a helical membrane-spanning segment; it reads LLIALGLMFFQQLSGINAVIF. The Extracellular segment spans residues 305–320; it reads YTVSIFKDAGSTIDEN. Residues 321–341 traverse the membrane as a helical segment; sequence LCTIIVGVVNFGATFFATVLI. Residues 342-347 are Cytoplasmic-facing; it reads DRLGRK. A helical membrane pass occupies residues 348 to 368; sequence ILLYISEVAMVITLLTLGTFF. Residues 369–387 are Extracellular-facing; sequence YYKNSGNDVSNIGWLPLAS. A helical membrane pass occupies residues 388 to 408; that stretch reads FVIYVIGFSSGVGPIPWLMLG. At 409–424 the chain is on the cytoplasmic side; it reads EILPGKIRGSAASVAT. Residues 425–445 form a helical membrane-spanning segment; sequence GFNWTCTFIVTKTFADIVAAI. The Extracellular portion of the chain corresponds to 446 to 448; the sequence is GNH. Residues 449 to 469 traverse the membrane as a helical segment; the sequence is GAFWFFGVICLIGLFFVIFFV. Over 470–504 the chain is Cytoplasmic; sequence PETQGKSLEEIERKMMGRVRRMSSVANMKPLSFNM.

The protein belongs to the major facilitator superfamily. Sugar transporter (TC 2.A.1.1) family. Trehalose transporter subfamily. In terms of tissue distribution, highest expression in the fat body. Not expressed in other tissues including the midgut, muscle, and integuments after 24 hours of dehydration.

It is found in the cell membrane. In terms of biological role, high-capacity facilitative transporter for trehalose, required to induce anhydrobiosis. Anhydrobiotic larvae can survive almost complete dehydration. Does not transport maltose, sucrose or lactose. Mediates the bidirectional transfer of trehalose. Responsible for the transport of trehalose synthesized in the fat body and the incorporation of trehalose into other tissues that require a carbon source, thereby regulating trehalose levels in the hemolymph. The polypeptide is Facilitated trehalose transporter Tret1 (Polypedilum vanderplanki (Sleeping chironomid midge)).